Reading from the N-terminus, the 218-residue chain is Thiamine-phosphate synthase (218 aa).

4-amino-2-methyl-5-(diphosphooxymethyl)pyrimidine-binding positions include 46–50 and Asp83; that span reads QFRDK. Residues Asp84 and Asp103 each coordinate Mg(2+). Ser122 contacts 4-amino-2-methyl-5-(diphosphooxymethyl)pyrimidine. 149–151 serves as a coordination point for 2-[(2R,5Z)-2-carboxy-4-methylthiazol-5(2H)-ylidene]ethyl phosphate; that stretch reads TNS. Lys152 is a 4-amino-2-methyl-5-(diphosphooxymethyl)pyrimidine binding site. Residues Gly181 and 201-202 contribute to the 2-[(2R,5Z)-2-carboxy-4-methylthiazol-5(2H)-ylidene]ethyl phosphate site; that span reads IT.

The protein belongs to the thiamine-phosphate synthase family. Mg(2+) is required as a cofactor.

It catalyses the reaction 2-[(2R,5Z)-2-carboxy-4-methylthiazol-5(2H)-ylidene]ethyl phosphate + 4-amino-2-methyl-5-(diphosphooxymethyl)pyrimidine + 2 H(+) = thiamine phosphate + CO2 + diphosphate. It carries out the reaction 2-(2-carboxy-4-methylthiazol-5-yl)ethyl phosphate + 4-amino-2-methyl-5-(diphosphooxymethyl)pyrimidine + 2 H(+) = thiamine phosphate + CO2 + diphosphate. The enzyme catalyses 4-methyl-5-(2-phosphooxyethyl)-thiazole + 4-amino-2-methyl-5-(diphosphooxymethyl)pyrimidine + H(+) = thiamine phosphate + diphosphate. The protein operates within cofactor biosynthesis; thiamine diphosphate biosynthesis; thiamine phosphate from 4-amino-2-methyl-5-diphosphomethylpyrimidine and 4-methyl-5-(2-phosphoethyl)-thiazole: step 1/1. Functionally, condenses 4-methyl-5-(beta-hydroxyethyl)thiazole monophosphate (THZ-P) and 2-methyl-4-amino-5-hydroxymethyl pyrimidine pyrophosphate (HMP-PP) to form thiamine monophosphate (TMP). The polypeptide is Thiamine-phosphate synthase (Actinobacillus pleuropneumoniae serotype 7 (strain AP76)).